The primary structure comprises 880 residues: Protein translocase subunit SecA (880 aa).

Residues Q87, 105 to 109 (GEGKT), and D501 each bind ATP. Residues C864, C866, C875, and H876 each contribute to the Zn(2+) site.

Belongs to the SecA family. Monomer and homodimer. Part of the essential Sec protein translocation apparatus which comprises SecA, SecYEG and auxiliary proteins SecDF-YajC and YidC. Zn(2+) is required as a cofactor.

The protein localises to the cell inner membrane. The protein resides in the cytoplasm. The catalysed reaction is ATP + H2O + cellular proteinSide 1 = ADP + phosphate + cellular proteinSide 2.. In terms of biological role, part of the Sec protein translocase complex. Interacts with the SecYEG preprotein conducting channel. Has a central role in coupling the hydrolysis of ATP to the transfer of proteins into and across the cell membrane, serving both as a receptor for the preprotein-SecB complex and as an ATP-driven molecular motor driving the stepwise translocation of polypeptide chains across the membrane. The chain is Protein translocase subunit SecA from Orientia tsutsugamushi (strain Boryong) (Rickettsia tsutsugamushi).